Consider the following 121-residue polypeptide: Large ribosomal subunit protein uL18 (121 aa).

The protein belongs to the universal ribosomal protein uL18 family. In terms of assembly, part of the 50S ribosomal subunit; part of the 5S rRNA/L5/L18/L25 subcomplex. Contacts the 5S and 23S rRNAs.

Its function is as follows. This is one of the proteins that bind and probably mediate the attachment of the 5S RNA into the large ribosomal subunit, where it forms part of the central protuberance. The sequence is that of Large ribosomal subunit protein uL18 from Ureaplasma parvum serovar 3 (strain ATCC 27815 / 27 / NCTC 11736).